Here is a 728-residue protein sequence, read N- to C-terminus: Microtubule-associated protein VP5 (728 aa).

This sequence belongs to the reoviridae microtubule-associated protein family.

It localises to the virion. Its subcellular location is the host cytoplasm. It is found in the host cytoskeleton. Functionally, minor inner capsid component. Displays NTPase and RNA 5'-triphosphatase (RTPase) activities. May function as a cofactor of polymerase. Associates with microtubules and plays a role in the formation, structural organization and morphology of viral inclusions, where the assembly of cores and the replication of viral RNA occur. This is Microtubule-associated protein VP5 (S5) from Ctenopharyngodon idella (Grass carp).